The primary structure comprises 353 residues: UPF0283 membrane protein YcjF (353 aa).

The next 3 helical transmembrane spans lie at 70–90 (MVMG…VQWT), 100–120 (VALG…GSVV), and 213–233 (ESTL…FIAW).

This sequence belongs to the UPF0283 family.

Its subcellular location is the cell inner membrane. The polypeptide is UPF0283 membrane protein YcjF (Escherichia coli O45:K1 (strain S88 / ExPEC)).